Here is a 336-residue protein sequence, read N- to C-terminus: Atypical chemokine receptor 1 (336 aa).

The Extracellular portion of the chain corresponds to 1-63 (MGNCLHQAEL…CNLLDDSSLP (63 aa)). 3 N-linked (GlcNAc...) asparagine glycosylation sites follow: Asn16, Asn27, and Asn33. 2 cysteine pairs are disulfide-bonded: Cys51–Cys276 and Cys129–Cys195. Residues 64-84 (FFILASVLGILASSTVLFLLF) traverse the membrane as a helical segment. The Cytoplasmic portion of the chain corresponds to 85–95 (RPLFRWQLCPG). A helical membrane pass occupies residues 96–116 (WPVLAQLAVGSTLFSIVVPIL). The Extracellular portion of the chain corresponds to 117–129 (APGLGNTRSSAPC). Residues 130–153 (SLGYCVWYGSAFAQALLLGCHASL) traverse the membrane as a helical segment. Residues 154–166 (GPKLGAGQVPGLT) lie on the Cytoplasmic side of the membrane. Residues 167 to 187 (LGLSVGLWGAAALLTLPITLA) form a helical membrane-spanning segment. Residues 188 to 207 (SDASDGLCTPIYSTELKALQ) lie on the Extracellular side of the membrane. A helical membrane pass occupies residues 208-228 (ATHTVACFAIFVLLPLGLFGA). The Cytoplasmic segment spans residues 229-244 (KGLKKVLGMGPGPWMN). A helical membrane pass occupies residues 245-265 (ILWVWFIFWWPHGVVLGLDFL). Residues 266 to 287 (VRSKLLLLPTCLAQQVLDLLLN) lie on the Extracellular side of the membrane. The helical transmembrane segment at 288 to 308 (LAEALAIVHCVATPLLLALFC) threads the bilayer. Topologically, residues 309-336 (HQATRTLVPSLPLPERWSSPVDTLGSKS) are cytoplasmic.

It belongs to the G-protein coupled receptor 1 family. Atypical chemokine receptor subfamily.

The protein resides in the early endosome. Its subcellular location is the recycling endosome. The protein localises to the membrane. Its function is as follows. Atypical chemokine receptor that controls chemokine levels and localization via high-affinity chemokine binding that is uncoupled from classic ligand-driven signal transduction cascades, resulting instead in chemokine sequestration, degradation, or transcytosis. Also known as interceptor (internalizing receptor) or chemokine-scavenging receptor or chemokine decoy receptor. Has a promiscuous chemokine-binding profile, interacting with inflammatory chemokines of both the CXC and the CC subfamilies but not with homeostatic chemokines. Acts as a receptor for chemokines including CCL2, CCL5, CCL7, CCL11, CCL13, CCL14, CCL17, CXCL5, CXCL6, IL8/CXCL8, CXCL11, GRO, RANTES, MCP-1 and TARC. May regulate chemokine bioavailability and, consequently, leukocyte recruitment through two distinct mechanisms: when expressed in endothelial cells, it sustains the abluminal to luminal transcytosis of tissue-derived chemokines and their subsequent presentation to circulating leukocytes; when expressed in erythrocytes, serves as blood reservoir of cognate chemokines but also as a chemokine sink, buffering potential surges in plasma chemokine levels. The chain is Atypical chemokine receptor 1 (ACKR1) from Saguinus imperator (Emperor tamarin).